A 295-amino-acid chain; its full sequence is Fatty acyl-CoA reductase (295 aa).

21 to 28 serves as a coordination point for NADP(+); sequence TGASSGIG. Serine 153 serves as a coordination point for substrate. Catalysis depends on tyrosine 166, which acts as the Proton acceptor.

It belongs to the short-chain dehydrogenases/reductases (SDR) family.

It carries out the reaction hexadecanal + NADP(+) + CoA = hexadecanoyl-CoA + NADPH + H(+). Catalyzes the NADPH-dependent reduction of long chain acyl-CoA (with chain lengths of 14 to 22 carbons) to the corresponding aldehyde. This Acinetobacter baylyi (strain ATCC 33305 / BD413 / ADP1) protein is Fatty acyl-CoA reductase (acr1).